Here is a 209-residue protein sequence, read N- to C-terminus: Probable peptide export ATP-binding protein YydI (209 aa).

Positions 1–207 (MNIANYTLKV…SVDKLIEVYI (207 aa)) constitute an ABC transporter domain. Residue 33-40 (GKNGVGKS) participates in ATP binding.

This sequence belongs to the ABC transporter superfamily. The complex is composed of two ATP-binding proteins (YydI), two transmembrane proteins (YydJ).

Its function is as follows. Suggested to be part of an ABC transporter complex YydIJ involved in export of the modified peptide YydF. Responsible for energy coupling to the transport system. The chain is Probable peptide export ATP-binding protein YydI (yydI) from Bacillus subtilis (strain 168).